Here is a 485-residue protein sequence, read N- to C-terminus: NADH-quinone oxidoreductase subunit N (485 aa).

14 helical membrane-spanning segments follow: residues 10 to 30 (AMLP…SIAW), 35 to 55 (FINA…LYFV), 75 to 95 (FYIG…YPWL), 104 to 124 (EFYL…SANH), 125 to 145 (LASL…LIGY), 159 to 179 (YMLL…LLYA), 203 to 223 (ILAG…LVPF), 235 to 255 (PAPV…AVVM), 271 to 291 (LVLS…AISQ), 297 to 317 (LLGY…VAVQ), 327 to 347 (GVYL…VSLM), 374 to 394 (AVMT…GFIG), 408 to 427 (WWLT…YYLR), and 449 to 469 (ALTA…VLGI).

This sequence belongs to the complex I subunit 2 family. In terms of assembly, NDH-1 is composed of 13 different subunits. Subunits NuoA, H, J, K, L, M, N constitute the membrane sector of the complex.

It localises to the cell inner membrane. The enzyme catalyses a quinone + NADH + 5 H(+)(in) = a quinol + NAD(+) + 4 H(+)(out). Its function is as follows. NDH-1 shuttles electrons from NADH, via FMN and iron-sulfur (Fe-S) centers, to quinones in the respiratory chain. The immediate electron acceptor for the enzyme in this species is believed to be ubiquinone. Couples the redox reaction to proton translocation (for every two electrons transferred, four hydrogen ions are translocated across the cytoplasmic membrane), and thus conserves the redox energy in a proton gradient. This chain is NADH-quinone oxidoreductase subunit N, found in Yersinia enterocolitica serotype O:8 / biotype 1B (strain NCTC 13174 / 8081).